Reading from the N-terminus, the 417-residue chain is Gelsolin (417 aa).

Residues Lys93–Leu171 form a Gelsolin-like 4 repeat. The Ca(2+) site is built by Gly107, Asp108, Glu138, Asp150, Gly155, Pro157, Thr187, Asn227, Asp228, Glu250, Asp331, Asp332, and Glu354. Gelsolin-like repeat units follow at residues Arg213–Leu261 and Ile316–Ile392.

This sequence belongs to the villin/gelsolin family.

Its subcellular location is the cytoplasm. It is found in the cytoskeleton. Its function is as follows. Calcium-regulated, actin-modulating protein that binds to the plus (or barbed) ends of actin monomers or filaments, preventing monomer exchange (end-blocking or capping). It can promote the assembly of monomers into filaments (nucleation) as well as sever filaments already formed. Plays a role in ciliogenesis. This Xenopus laevis (African clawed frog) protein is Gelsolin (gsn).